The sequence spans 488 residues: Glutamyl-tRNA(Gln) amidotransferase subunit B, mitochondrial (488 aa).

This sequence belongs to the GatB/GatE family. GatB subfamily. As to quaternary structure, subunit of the heterotrimeric GatFAB amidotransferase (AdT) complex, composed of A, B and F subunits.

The protein resides in the mitochondrion. It carries out the reaction L-glutamyl-tRNA(Gln) + L-glutamine + ATP + H2O = L-glutaminyl-tRNA(Gln) + L-glutamate + ADP + phosphate + H(+). Its function is as follows. Allows the formation of correctly charged Gln-tRNA(Gln) through the transamidation of misacylated Glu-tRNA(Gln) in the mitochondria. The reaction takes place in the presence of glutamine and ATP through an activated gamma-phospho-Glu-tRNA(Gln). This is Glutamyl-tRNA(Gln) amidotransferase subunit B, mitochondrial from Candida albicans (strain WO-1) (Yeast).